Reading from the N-terminus, the 209-residue chain is Imidazole glycerol phosphate synthase subunit HisH (209 aa).

Positions 3–209 (SVAVIDYGMG…ANFLTWNGVS (207 aa)) constitute a Glutamine amidotransferase type-1 domain. Catalysis depends on cysteine 82, which acts as the Nucleophile. Active-site residues include histidine 187 and glutamate 189.

Heterodimer of HisH and HisF.

It is found in the cytoplasm. The catalysed reaction is 5-[(5-phospho-1-deoxy-D-ribulos-1-ylimino)methylamino]-1-(5-phospho-beta-D-ribosyl)imidazole-4-carboxamide + L-glutamine = D-erythro-1-(imidazol-4-yl)glycerol 3-phosphate + 5-amino-1-(5-phospho-beta-D-ribosyl)imidazole-4-carboxamide + L-glutamate + H(+). The enzyme catalyses L-glutamine + H2O = L-glutamate + NH4(+). It participates in amino-acid biosynthesis; L-histidine biosynthesis; L-histidine from 5-phospho-alpha-D-ribose 1-diphosphate: step 5/9. Its function is as follows. IGPS catalyzes the conversion of PRFAR and glutamine to IGP, AICAR and glutamate. The HisH subunit catalyzes the hydrolysis of glutamine to glutamate and ammonia as part of the synthesis of IGP and AICAR. The resulting ammonia molecule is channeled to the active site of HisF. The polypeptide is Imidazole glycerol phosphate synthase subunit HisH (Nitrosococcus oceani (strain ATCC 19707 / BCRC 17464 / JCM 30415 / NCIMB 11848 / C-107)).